We begin with the raw amino-acid sequence, 210 residues long: Na(+)-translocating NADH-quinone reductase subunit D (210 aa).

Helical transmembrane passes span 42 to 62 (FVMT…VSVI), 72 to 92 (IIVQ…ILKA), 103 to 123 (VFVG…AFAM), 131 to 151 (LIDG…VGFF), and 178 to 198 (NGLM…IWAI).

It belongs to the NqrDE/RnfAE family. In terms of assembly, composed of six subunits; NqrA, NqrB, NqrC, NqrD, NqrE and NqrF.

It localises to the cell inner membrane. It carries out the reaction a ubiquinone + n Na(+)(in) + NADH + H(+) = a ubiquinol + n Na(+)(out) + NAD(+). Its function is as follows. NQR complex catalyzes the reduction of ubiquinone-1 to ubiquinol by two successive reactions, coupled with the transport of Na(+) ions from the cytoplasm to the periplasm. NqrA to NqrE are probably involved in the second step, the conversion of ubisemiquinone to ubiquinol. The chain is Na(+)-translocating NADH-quinone reductase subunit D from Vibrio vulnificus (strain YJ016).